We begin with the raw amino-acid sequence, 229 residues long: MKSAEWFEASTEEERVEIQRKVARKVRLEPLDDVDAVAGVDVSYRGEEYRAAAVVLDPETYEVLDRRVVHGTTDVPYEPGFLAFREGPPALEALEGLDFDLLFVHGHGVAHPRRAGLASHLGVALDVPTIGVARRPLVGRSKEEPSRIGDTTPLVHRGEVVGYLVRTDAEARPVVVSPGHRCNLEDAVRWTLRLVRVGKWPEPLRLADLLSRRGASRVEGESRGAGVRR.

The protein belongs to the endonuclease V family.

The protein localises to the cytoplasm. The enzyme catalyses Endonucleolytic cleavage at apurinic or apyrimidinic sites to products with a 5'-phosphate.. In terms of biological role, DNA repair enzyme involved in the repair of deaminated bases. Selectively cleaves double-stranded DNA at the second phosphodiester bond 3' to a deoxyinosine leaving behind the intact lesion on the nicked DNA. The polypeptide is Endonuclease V (Methanopyrus kandleri (strain AV19 / DSM 6324 / JCM 9639 / NBRC 100938)).